A 386-amino-acid chain; its full sequence is Phosphate acyltransferase (386 aa).

The segment at 359–386 (PHRARQDELGENKVVGADQSMTAKATGT) is disordered. Over residues 377 to 386 (QSMTAKATGT) the composition is skewed to polar residues.

Belongs to the PlsX family. As to quaternary structure, homodimer. Probably interacts with PlsY.

The protein resides in the cytoplasm. The catalysed reaction is a fatty acyl-[ACP] + phosphate = an acyl phosphate + holo-[ACP]. It participates in lipid metabolism; phospholipid metabolism. In terms of biological role, catalyzes the reversible formation of acyl-phosphate (acyl-PO(4)) from acyl-[acyl-carrier-protein] (acyl-ACP). This enzyme utilizes acyl-ACP as fatty acyl donor, but not acyl-CoA. In Beijerinckia indica subsp. indica (strain ATCC 9039 / DSM 1715 / NCIMB 8712), this protein is Phosphate acyltransferase.